Here is a 1171-residue protein sequence, read N- to C-terminus: ATP-dependent helicase/deoxyribonuclease subunit B (1171 aa).

One can recognise a UvrD-like helicase ATP-binding domain in the interval 1 to 287 (MSLRFVIGRA…IPLMEQPRFH (287 aa)). 8–15 (GRAGSGKS) is an ATP binding site. The 307-residue stretch at 281–587 (MEQPRFHSPA…QFANIPPSLD (307 aa)) folds into the UvrD-like helicase C-terminal domain. The [4Fe-4S] cluster site is built by cysteine 805, cysteine 1129, cysteine 1132, and cysteine 1138.

Belongs to the helicase family. AddB/RexB type 1 subfamily. As to quaternary structure, heterodimer of AddA and AddB. The cofactor is Mg(2+). [4Fe-4S] cluster is required as a cofactor.

Functionally, the heterodimer acts as both an ATP-dependent DNA helicase and an ATP-dependent, dual-direction single-stranded exonuclease. Recognizes the chi site generating a DNA molecule suitable for the initiation of homologous recombination. The AddB subunit has 5' -&gt; 3' nuclease activity but not helicase activity. This chain is ATP-dependent helicase/deoxyribonuclease subunit B, found in Bacillus cereus (strain G9842).